We begin with the raw amino-acid sequence, 547 residues long: Mercuric reductase (547 aa).

Positions 5 to 70 (APTELAITGM…AVVASGYGVH (66 aa)) constitute an HMA domain. A metal cation-binding residues include Cys16 and Cys19. FAD-binding residues include Ala96 and Thr121. A disulfide bridge connects residues Cys122 and Cys127. Lys131, Ala197, Asp389, and Val397 together coordinate FAD. Hg(2+) contacts are provided by Cys544 and Cys545.

The protein belongs to the class-I pyridine nucleotide-disulfide oxidoreductase family. As to quaternary structure, homodimer. FAD is required as a cofactor.

The catalysed reaction is Hg + NADP(+) + H(+) = Hg(2+) + NADPH. Its function is as follows. Resistance to Hg(2+) in bacteria appears to be governed by a specialized system which includes mercuric reductase. MerA protein is responsible for volatilizing mercury as Hg(0). The chain is Mercuric reductase (merA) from Acidithiobacillus ferrooxidans (Thiobacillus ferrooxidans).